Consider the following 169-residue polypeptide: Ribosome maturation factor RimM (169 aa).

A PRC barrel domain is found at 97 to 169; it reads EDEYYWTDLV…IITADWGLDY (73 aa).

This sequence belongs to the RimM family. In terms of assembly, binds ribosomal protein uS19.

The protein localises to the cytoplasm. Its function is as follows. An accessory protein needed during the final step in the assembly of 30S ribosomal subunit, possibly for assembly of the head region. Essential for efficient processing of 16S rRNA. May be needed both before and after RbfA during the maturation of 16S rRNA. It has affinity for free ribosomal 30S subunits but not for 70S ribosomes. This chain is Ribosome maturation factor RimM, found in Neisseria meningitidis serogroup C / serotype 2a (strain ATCC 700532 / DSM 15464 / FAM18).